We begin with the raw amino-acid sequence, 369 residues long: 4-hydroxy-3-methylbut-2-en-1-yl diphosphate synthase (flavodoxin) (369 aa).

[4Fe-4S] cluster contacts are provided by C270, C273, C305, and E312.

The protein belongs to the IspG family. The cofactor is [4Fe-4S] cluster.

It catalyses the reaction (2E)-4-hydroxy-3-methylbut-2-enyl diphosphate + oxidized [flavodoxin] + H2O + 2 H(+) = 2-C-methyl-D-erythritol 2,4-cyclic diphosphate + reduced [flavodoxin]. It functions in the pathway isoprenoid biosynthesis; isopentenyl diphosphate biosynthesis via DXP pathway; isopentenyl diphosphate from 1-deoxy-D-xylulose 5-phosphate: step 5/6. In terms of biological role, converts 2C-methyl-D-erythritol 2,4-cyclodiphosphate (ME-2,4cPP) into 1-hydroxy-2-methyl-2-(E)-butenyl 4-diphosphate. This is 4-hydroxy-3-methylbut-2-en-1-yl diphosphate synthase (flavodoxin) from Pseudomonas putida (strain GB-1).